We begin with the raw amino-acid sequence, 126 residues long: MVSPHRLLKDYQQLLSLSQKILHLAISGQWDTLVEQEIVYVQSVEGLVNTPIPDEIDSVMRLHLRQILQEVMDNEAKVKQLLQKRMDELSSLMGQSLKQKSINATYSEFAGQRRLLDDPLPDETRS.

Residues 1–50 (MVSPHRLLKDYQQLLSLSQKILHLAISGQWDTLVEQEIVYVQSVEGLVNT) are required for homodimerization. Residues 60–98 (MRLHLRQILQEVMDNEAKVKQLLQKRMDELSSLMGQSLK) are fliD binding.

This sequence belongs to the FliT family. In terms of assembly, homodimer. Interacts with FliD and FlhC.

Its subcellular location is the cytoplasm. It localises to the cytosol. In terms of biological role, dual-function protein that regulates the transcription of class 2 flagellar operons and that also acts as an export chaperone for the filament-capping protein FliD. As a transcriptional regulator, acts as an anti-FlhDC factor; it directly binds FlhC, thus inhibiting the binding of the FlhC/FlhD complex to class 2 promoters, resulting in decreased expression of class 2 flagellar operons. As a chaperone, effects FliD transition to the membrane by preventing its premature polymerization, and by directing it to the export apparatus. This is Flagellar protein FliT from Pectobacterium atrosepticum (strain SCRI 1043 / ATCC BAA-672) (Erwinia carotovora subsp. atroseptica).